We begin with the raw amino-acid sequence, 309 residues long: NADH-cytochrome b5 reductase 1 (309 aa).

The helical transmembrane segment at 29 to 49 threads the bilayer; it reads EFVPYAVALTAVLAGFKLFTG. In terms of domain architecture, FAD-binding FR-type spans 60-165; that stretch reads TEFQEFVLKE…RGPKGAMVYT (106 aa). FAD-binding positions include 145–160 and 171–208; these read TTLK…GPKG and HIGM…KVDL.

This sequence belongs to the flavoprotein pyridine nucleotide cytochrome reductase family. As to quaternary structure, monomer. Component of the 2-(3-amino-3-carboxypropyl)histidine synthase complex composed of dph1, dph2, dph3 and a NADH-dependent reductase, predominantly cbr1. The cofactor is FAD.

The protein localises to the mitochondrion outer membrane. It catalyses the reaction 2 Fe(III)-[cytochrome b5] + NADH = 2 Fe(II)-[cytochrome b5] + NAD(+) + H(+). The enzyme catalyses 2 Fe(3+)-[Dph3] + NADH = 2 Fe(2+)-[Dph3] + NAD(+) + H(+). Its pathway is protein modification; peptidyl-diphthamide biosynthesis. Functionally, NADH-dependent reductase for dph3 and cytochrome b5. Required for the first step of diphthamide biosynthesis, a post-translational modification of histidine which occurs in elongation factor 2. Dph1 and dph2 transfer a 3-amino-3-carboxypropyl (ACP) group from S-adenosyl-L-methionine (SAM) to a histidine residue, the reaction is assisted by a reduction system comprising dph3 and a NADH-dependent reductase, predominantly cbr1. By reducing dph3, also involved in the formation of the tRNA wobble base modification mcm5s 2U (5-methoxycarbonylmethyl-2-thiouridine), mediated by the elongator complex. The cytochrome b5/NADH cytochrome b5 reductase electron transfer system supports the catalytic activity of several sterol biosynthetic enzymes. The chain is NADH-cytochrome b5 reductase 1 (cbr1) from Aspergillus clavatus (strain ATCC 1007 / CBS 513.65 / DSM 816 / NCTC 3887 / NRRL 1 / QM 1276 / 107).